A 57-amino-acid chain; its full sequence is Granulin-1 (57 aa).

2 disulfide bridges follow: cysteine 4–cysteine 16 and cysteine 10–cysteine 26.

Belongs to the granulin family. Post-translationally, granulins are disulfide bridged. As to expression, ubiquitous.

Its subcellular location is the secreted. In terms of biological role, granulins have possible cytokine-like activity. They may play a role in inflammation, wound repair, and tissue remodeling. This is Granulin-1 from Cyprinus carpio (Common carp).